We begin with the raw amino-acid sequence, 339 residues long: Ketol-acid reductoisomerase (NADP(+)) (339 aa).

One can recognise a KARI N-terminal Rossmann domain in the interval 1 to 182 (MRVYYDRDAD…GGGRSGVIET (182 aa)). NADP(+) contacts are provided by residues 24–27 (YGSQ), arginine 48, serine 51, threonine 53, and 83–86 (DELQ). Residue histidine 108 is part of the active site. Residue glycine 134 coordinates NADP(+). The 146-residue stretch at 183-328 (TFKEECETDL…EKLRGMMPWI (146 aa)) folds into the KARI C-terminal knotted domain. Positions 191, 195, 227, and 231 each coordinate Mg(2+). Residue serine 252 coordinates substrate.

It belongs to the ketol-acid reductoisomerase family. Mg(2+) serves as cofactor.

It catalyses the reaction (2R)-2,3-dihydroxy-3-methylbutanoate + NADP(+) = (2S)-2-acetolactate + NADPH + H(+). It carries out the reaction (2R,3R)-2,3-dihydroxy-3-methylpentanoate + NADP(+) = (S)-2-ethyl-2-hydroxy-3-oxobutanoate + NADPH + H(+). Its pathway is amino-acid biosynthesis; L-isoleucine biosynthesis; L-isoleucine from 2-oxobutanoate: step 2/4. It functions in the pathway amino-acid biosynthesis; L-valine biosynthesis; L-valine from pyruvate: step 2/4. Involved in the biosynthesis of branched-chain amino acids (BCAA). Catalyzes an alkyl-migration followed by a ketol-acid reduction of (S)-2-acetolactate (S2AL) to yield (R)-2,3-dihydroxy-isovalerate. In the isomerase reaction, S2AL is rearranged via a Mg-dependent methyl migration to produce 3-hydroxy-3-methyl-2-ketobutyrate (HMKB). In the reductase reaction, this 2-ketoacid undergoes a metal-dependent reduction by NADPH to yield (R)-2,3-dihydroxy-isovalerate. The protein is Ketol-acid reductoisomerase (NADP(+)) of Brucella anthropi (strain ATCC 49188 / DSM 6882 / CCUG 24695 / JCM 21032 / LMG 3331 / NBRC 15819 / NCTC 12168 / Alc 37) (Ochrobactrum anthropi).